Reading from the N-terminus, the 453-residue chain is MMTLKEALSLASDDIKKLRDDLTLKIKESKIGAYVEQLTSTDISQSGVGIPIAIKDNINVKNWEITCSSNILKGYISPYNATVIEKLEKAGLSPFGRTNMDEFAMGSSTESSCYGKTLNPIDNEKVPGGSSGGSAAAVAGGIAIAALGTDTGGSIRQPAAYCGCVGMKPTYGRVSRYGITAYSSSLDQCGPITQNVEDAAILYDIISGYDPMDSTSANINYEAVTPKLNSDKKLTIAVIDNFVSQASPAIQKGFQKAVNALEEGGHKIIHKNMLDTQKIVSTYYIVATAEASANLARFDGVRFGNRKGESGLKDMYVQTKSQGFGHEVQKRIMLGSFVLSSGYYDAYYIKAQKVRHLIKDEYSKIFSEADLILSPVAPTTAPKFGSFKTSLEMYLSDIYTISVNLAGLPAISLPVDKDEDGMPIGLQFIANAYEEQTLFDGALSLEKAINYKK.

Catalysis depends on charge relay system residues Lys-55 and Ser-130. Ser-154 serves as the catalytic Acyl-ester intermediate.

Belongs to the amidase family. GatA subfamily. As to quaternary structure, heterotrimer of A, B and C subunits.

The enzyme catalyses L-glutamyl-tRNA(Gln) + L-glutamine + ATP + H2O = L-glutaminyl-tRNA(Gln) + L-glutamate + ADP + phosphate + H(+). Allows the formation of correctly charged Gln-tRNA(Gln) through the transamidation of misacylated Glu-tRNA(Gln) in organisms which lack glutaminyl-tRNA synthetase. The reaction takes place in the presence of glutamine and ATP through an activated gamma-phospho-Glu-tRNA(Gln). In Aliarcobacter butzleri (strain RM4018) (Arcobacter butzleri), this protein is Glutamyl-tRNA(Gln) amidotransferase subunit A.